The chain runs to 1482 residues: Cystic fibrosis transmembrane conductance regulator (1482 aa).

At 1–77 (MQRSPLEKAS…KLINALRRCF (77 aa)) the chain is on the cytoplasmic side. A helical transmembrane segment spans residues 78-98 (FWRFMFYGIILYLGEVTKAVQ). Residues 81 to 365 (FMFYGIILYL…WAVQTWYDSL (285 aa)) enclose the ABC transmembrane type-1 1 domain. At 99-122 (PLLLGRIIASYDPDNKAERSIAIY) the chain is on the extracellular side. Residues 123-146 (LGVGLCLLFIVRTLLLHPAIFGPH) form a helical membrane-spanning segment. Residues 147 to 195 (HIGMQMRIAMFSLIYKKTLKLSSRVLDKISIGQLVSLLSNNLNKFDEGL) lie on the Cytoplasmic side of the membrane. A helical membrane pass occupies residues 196–216 (ALAHFVWIAPLQVTLLMGLLW). At 217 to 222 (ELLQAS) the chain is on the extracellular side. A helical transmembrane segment spans residues 223 to 243 (AFCGLAFLVVLALFQAGLGKM). Residues 244-298 (MMKYRDQRAGKINERLVITSEMIENIQSVKAYCWEEAMEKMIENLRQTELKLTRK) lie on the Cytoplasmic side of the membrane. The helical transmembrane segment at 299-319 (AAYVRYFNSSAFFFSGLFVVF) threads the bilayer. Residues 320–339 (LSVLPYALLKGIMLRKIFTT) are Extracellular-facing. Residues 340–358 (ISFCIVLRMAVTRQFPWAV) form a helical membrane-spanning segment. The Cytoplasmic segment spans residues 359-859 (QTWYDSLGAI…YLRYVTVHKS (501 aa)). ATP contacts are provided by residues Trp401, Ser434, 458 to 465 (GSTGAGKT), and Gln493. Residues 423–646 (NGDNSLFFSN…RPDFSSKLMG (224 aa)) enclose the ABC transporter 1 domain. Cys524 carries the S-palmitoyl cysteine lipid modification. Residues Ser549 and Ser660 each carry the phosphoserine modification. The segment at 654 to 832 (TAERRNSIIT…EEINEEDLRE (179 aa)) is disordered R region. A Phosphoserine; by PKA modification is found at Ser670. Ser686 carries the phosphoserine modification. Residue Lys688 forms a Glycyl lysine isopeptide (Lys-Gly) (interchain with G-Cter in ubiquitin) linkage. Phosphoserine is present on residues Ser700 and Ser712. A Phosphothreonine modification is found at Thr717. 5 positions are modified to phosphoserine: Ser737, Ser768, Ser791, Ser796, and Ser814. A helical transmembrane segment spans residues 860-880 (LIFVLIWCLVVFLAEVAACLV). The ABC transmembrane type-1 2 domain maps to 860 to 1156 (LIFVLIWCLV…AVNSSIDVDS (297 aa)). Residues 881-919 (VLCLLKKTSPQDKGNSTKGANNSYAVIITSTSAYYVFYI) are Extracellular-facing. N-linked (GlcNAc...) asparagine glycosylation is found at Asn895 and Asn901. Residues 920 to 940 (YVGVADGLLALGLFRGLPLVH) traverse the membrane as a discontinuously helical segment. The Cytoplasmic segment spans residues 941–991 (TLITVSKILHRKMLHSVLQAPMSTLNTLKAGGILNRFSKDIAVLDDLLPLT). A helical membrane pass occupies residues 992–1012 (IFDFIQLLLIVIGAVAVVSVL). Residues 1013–1014 (KP) are Extracellular-facing. Residues 1015 to 1035 (YIFLATVPVIVAFILLRAYFL) form a helical membrane-spanning segment. The Cytoplasmic segment spans residues 1036–1096 (HTSQQLKQLE…TANWFLYLST (61 aa)). A helical transmembrane segment spans residues 1097-1117 (LRWFQMRIEMIFVIFFIAVTF). The Extracellular portion of the chain corresponds to 1118-1131 (ISILTTGEGEGTVG). A helical membrane pass occupies residues 1132 to 1152 (IILTLAMNIMSTLQWAVNSSI). Topologically, residues 1153 to 1482 (DVDSLMRSVS…TEEEVQETRL (330 aa)) are cytoplasmic. The ABC transporter 2 domain maps to 1212 to 1445 (MTVKDLTAKY…KSLFRQAISP (234 aa)). ATP-binding positions include Tyr1221 and 1246–1253 (GRTGSGKS). Residues 1388-1482 (RTLKQAFADC…TEEEVQETRL (95 aa)) are interaction with GORASP2. A lipid anchor (S-palmitoyl cysteine) is attached at Cys1397. Basic residues predominate over residues 1454-1464 (HRNSSKQRSRS). A disordered region spans residues 1454–1482 (HRNSSKQRSRSKIAALKEETEEEVQETRL). Position 1458 is a phosphoserine (Ser1458). The segment covering 1472–1482 (ETEEEVQETRL) has biased composition (acidic residues). Positions 1480-1482 (TRL) match the PDZ-binding motif.

It belongs to the ABC transporter superfamily. ABCC family. CFTR transporter (TC 3.A.1.202) subfamily. In terms of assembly, monomer; does not require oligomerization for channel activity. May form oligomers in the membrane. Interacts with SLC26A3, SLC26A6 and NHERF1. Interacts with SHANK2. Interacts with MYO6. Interacts (via C-terminus) with GOPC (via PDZ domain); this promotes CFTR internalization and thereby decreases channel activity. Interacts with SLC4A7 through NHERF1. Found in a complex with MYO5B and RAB11A. Interacts with ANO1. Interacts with SLC26A8. Interacts with AHCYL1; the interaction increases CFTR activity. Interacts with CSE1L. The core-glycosylated form interacts with GORASP2 (via PDZ GRASP-type 1 domain) in respone to ER stress. Interacts with MARCHF2; the interaction leads to CFTR ubiqtuitination and degradation. Interacts with ADGRG2. In terms of processing, N-glycosylated. Post-translationally, phosphorylated; cAMP treatment promotes phosphorylation and activates the channel. Dephosphorylation decreases the ATPase activity (in vitro). Phosphorylation at PKA sites activates the channel. Phosphorylation at PKC sites enhances the response to phosphorylation by PKA. Phosphorylated by AMPK; this inhibits channel activity. Ubiquitinated, leading to its degradation in the lysosome. Deubiquitination by USP10 in early endosomes enhances its endocytic recycling to the cell membrane. Ubiquitinated by RNF185 during ER stress. Ubiquitinated by MARCHF2.

The protein resides in the apical cell membrane. The protein localises to the early endosome membrane. Its subcellular location is the cell membrane. It is found in the recycling endosome membrane. It localises to the endoplasmic reticulum membrane. The protein resides in the nucleus. It catalyses the reaction ATP + H2O + closed Cl(-) channel = ADP + phosphate + open Cl(-) channel.. The catalysed reaction is chloride(in) = chloride(out). The enzyme catalyses hydrogencarbonate(in) = hydrogencarbonate(out). It carries out the reaction ATP + H2O = ADP + phosphate + H(+). Its function is as follows. Epithelial ion channel that plays an important role in the regulation of epithelial ion and water transport and fluid homeostasis. Mediates the transport of chloride ions across the cell membrane. Possesses an intrinsic ATPase activity and utilizes ATP to gate its channel; the passive flow of anions through the channel is gated by cycles of ATP binding and hydrolysis by the ATP-binding domains. The ion channel is also permeable to HCO(3)(-); selectivity depends on the extracellular chloride concentration. Exerts its function also by modulating the activity of other ion channels and transporters. Contributes to the regulation of the pH and the ion content of the epithelial fluid layer. Modulates the activity of the epithelial sodium channel (ENaC) complex, in part by regulating the cell surface expression of the ENaC complex. May regulate bicarbonate secretion and salvage in epithelial cells by regulating the transporter SLC4A7. Can inhibit the chloride channel activity of ANO1. Plays a role in the chloride and bicarbonate homeostasis during sperm epididymal maturation and capacitation. The polypeptide is Cystic fibrosis transmembrane conductance regulator (Sus scrofa (Pig)).